The following is a 395-amino-acid chain: Extracellular cysteine protease (395 aa).

An N-terminal signal peptide occupies residues 1 to 30 (MKKKLSYMITIMLAFTLSLALGLFFNSAHA). The propeptide occupies 31–221 (DSLPQKNGAN…TLEYQSTRNE (191 aa)). Catalysis depends on residues cysteine 245, histidine 341, and asparagine 362.

Belongs to the peptidase C47 family. In terms of processing, proteolytically cleaved.

Its subcellular location is the secreted. It is found in the cell wall. Its function is as follows. Cysteine protease able to cleave elastin, insulin, myoglobin, fibronectin, fibrinogen, HMW-kininogen, alpha-1-protease inhibitor and alpha-1-antitrypsin. Along with other extracellular proteases may contribute to the colonization and infection of human tissues. The chain is Extracellular cysteine protease (ecpA) from Staphylococcus epidermidis (strain ATCC 35984 / DSM 28319 / BCRC 17069 / CCUG 31568 / BM 3577 / RP62A).